The following is a 201-amino-acid chain: Small ribosomal subunit protein uS4c (201 aa).

The tract at residues 15 to 44 is disordered; that stretch reads LGALPGLTNKRPRAGSDLRNQSRSGKKSQY. The S4 RNA-binding domain maps to 89-149; that stretch reads MRLDNILFRL…DEQKSRALIQ (61 aa).

It belongs to the universal ribosomal protein uS4 family. As to quaternary structure, part of the 30S ribosomal subunit. Contacts protein S5. The interaction surface between S4 and S5 is involved in control of translational fidelity.

It is found in the plastid. The protein resides in the chloroplast. Functionally, one of the primary rRNA binding proteins, it binds directly to 16S rRNA where it nucleates assembly of the body of the 30S subunit. Its function is as follows. With S5 and S12 plays an important role in translational accuracy. This chain is Small ribosomal subunit protein uS4c (rps4), found in Helianthus annuus (Common sunflower).